We begin with the raw amino-acid sequence, 192 residues long: Epididymal-specific lipocalin-12 (192 aa).

The signal sequence occupies residues 1–19 (MRLLCGLWLWLSLLKVLQA). Cys88 and Cys192 form a disulfide bridge.

It belongs to the calycin superfamily. Lipocalin family. As to quaternary structure, monomer.

The protein localises to the secreted. Binds all-trans retinoic acid and may act as a retinoid carrier protein within the epididymis. May play a role in male fertility. In Homo sapiens (Human), this protein is Epididymal-specific lipocalin-12 (LCN12).